The sequence spans 218 residues: Stress response regulator protein 1 (218 aa).

The 120-residue stretch at 90–209 folds into the Response regulatory domain; that stretch reads RFLLVDDNSI…YRVVLDVVDN (120 aa). D142 carries the post-translational modification 4-aspartylphosphate.

In terms of biological role, required for stress adaptation, morphogenesis and virulence. The sequence is that of Stress response regulator protein 1 (SRR1) from Meyerozyma guilliermondii (strain ATCC 6260 / CBS 566 / DSM 6381 / JCM 1539 / NBRC 10279 / NRRL Y-324) (Yeast).